The following is a 1073-amino-acid chain: DNA-directed RNA polymerase subunit beta (1073 aa).

The protein belongs to the RNA polymerase beta chain family. In plastids the minimal PEP RNA polymerase catalytic core is composed of four subunits: alpha, beta, beta', and beta''. When a (nuclear-encoded) sigma factor is associated with the core the holoenzyme is formed, which can initiate transcription.

The protein resides in the plastid. Its subcellular location is the chloroplast. It carries out the reaction RNA(n) + a ribonucleoside 5'-triphosphate = RNA(n+1) + diphosphate. Its function is as follows. DNA-dependent RNA polymerase catalyzes the transcription of DNA into RNA using the four ribonucleoside triphosphates as substrates. The protein is DNA-directed RNA polymerase subunit beta of Aethionema cordifolium (Lebanon stonecress).